We begin with the raw amino-acid sequence, 282 residues long: Nucleotide-binding protein XCV3122 (282 aa).

5–12 contacts ATP; it reads GLSGSGKS. 57-60 contributes to the GTP binding site; sequence DVRS.

It belongs to the RapZ-like family.

Functionally, displays ATPase and GTPase activities. This Xanthomonas euvesicatoria pv. vesicatoria (strain 85-10) (Xanthomonas campestris pv. vesicatoria) protein is Nucleotide-binding protein XCV3122.